The primary structure comprises 385 residues: Probable splicing factor YJU2B (385 aa).

The interval 1–26 (MGERKGQNKYYPPDFNPEKHGSLNRY) is disordered. Serine 40 bears the Phosphoserine mark. Residues 182–214 (LNSMLRRHFREKKKAMQEEEEKDQALQAKASLA) adopt a coiled-coil conformation. The disordered stretch occupies residues 257 to 385 (PSAQGPSASS…VADYSDSESE (129 aa)). The segment covering 258 to 271 (SAQGPSASSSKASS) has biased composition (low complexity). At serine 306 the chain carries Phosphoserine. Positions 359 to 373 (GSSQEDLLNPNTPNA) are enriched in polar residues.

It belongs to the CWC16 family.

It is found in the nucleus. Functionally, may be involved in mRNA splicing. This Mus musculus (Mouse) protein is Probable splicing factor YJU2B (Yju2b).